The sequence spans 427 residues: Serine--tRNA ligase (427 aa).

232-234 (TAE) serves as a coordination point for L-serine. 263–265 (RSE) provides a ligand contact to ATP. Glutamate 286 provides a ligand contact to L-serine. 350 to 353 (EISS) provides a ligand contact to ATP. Position 385 (serine 385) interacts with L-serine.

It belongs to the class-II aminoacyl-tRNA synthetase family. Type-1 seryl-tRNA synthetase subfamily. As to quaternary structure, homodimer. The tRNA molecule binds across the dimer.

The protein localises to the cytoplasm. The catalysed reaction is tRNA(Ser) + L-serine + ATP = L-seryl-tRNA(Ser) + AMP + diphosphate + H(+). It catalyses the reaction tRNA(Sec) + L-serine + ATP = L-seryl-tRNA(Sec) + AMP + diphosphate + H(+). The protein operates within aminoacyl-tRNA biosynthesis; selenocysteinyl-tRNA(Sec) biosynthesis; L-seryl-tRNA(Sec) from L-serine and tRNA(Sec): step 1/1. Its function is as follows. Catalyzes the attachment of serine to tRNA(Ser). Is also able to aminoacylate tRNA(Sec) with serine, to form the misacylated tRNA L-seryl-tRNA(Sec), which will be further converted into selenocysteinyl-tRNA(Sec). This chain is Serine--tRNA ligase, found in Aromatoleum aromaticum (strain DSM 19018 / LMG 30748 / EbN1) (Azoarcus sp. (strain EbN1)).